The following is a 188-amino-acid chain: ATP synthase subunit b (188 aa).

Residues 19-39 form a helical membrane-spanning segment; sequence VYVLGATIVSFLVLFLFITYF.

The protein belongs to the ATPase B chain family. In terms of assembly, F-type ATPases have 2 components, F(1) - the catalytic core - and F(0) - the membrane proton channel. F(1) has five subunits: alpha(3), beta(3), gamma(1), delta(1), epsilon(1). F(0) has three main subunits: a(1), b(2) and c(10-14). The alpha and beta chains form an alternating ring which encloses part of the gamma chain. F(1) is attached to F(0) by a central stalk formed by the gamma and epsilon chains, while a peripheral stalk is formed by the delta and b chains.

The protein localises to the cell membrane. In terms of biological role, f(1)F(0) ATP synthase produces ATP from ADP in the presence of a proton or sodium gradient. F-type ATPases consist of two structural domains, F(1) containing the extramembraneous catalytic core and F(0) containing the membrane proton channel, linked together by a central stalk and a peripheral stalk. During catalysis, ATP synthesis in the catalytic domain of F(1) is coupled via a rotary mechanism of the central stalk subunits to proton translocation. Its function is as follows. Component of the F(0) channel, it forms part of the peripheral stalk, linking F(1) to F(0). This chain is ATP synthase subunit b, found in Mesomycoplasma hyopneumoniae (strain 7448) (Mycoplasma hyopneumoniae).